Consider the following 68-residue polypeptide: uncharacterized protein (68 aa).

The region spanning 2 to 67 (KTITLNIKGI…VIEDAGFDAT (66 aa)) is the HMA domain. A metal cation is bound by residues cysteine 13 and cysteine 16.

This is an uncharacterized protein from Haemophilus influenzae (strain ATCC 51907 / DSM 11121 / KW20 / Rd).